The primary structure comprises 682 residues: ATP-dependent DNA helicase RecG (682 aa).

The tract at residues 46–139 (ELRDLEEVKH…LKNGPHQEDK (94 aa)) is wedge domain. The Helicase ATP-binding domain maps to 271–432 (DMSSPYRMNR…VFGEMDVSVI (162 aa)). 284–291 (GDVGSGKT) is an ATP binding site. The DEAH box motif lies at 385-388 (DEQH). The region spanning 451 to 611 (MLDRILAFVE…GFELSEKDLE (161 aa)) is the Helicase C-terminal domain.

This sequence belongs to the helicase family. RecG subfamily. As to quaternary structure, monomer. Interacts with SSB (sbbA), via the latter's 6 C-terminal residues. Colocalizes with DNA pol III subunit gamma/tau (dnaX).

The protein localises to the cytoplasm. Its subcellular location is the nucleoid. The enzyme catalyses Couples ATP hydrolysis with the unwinding of duplex DNA by translocating in the 3'-5' direction.. The catalysed reaction is ATP + H2O = ADP + phosphate + H(+). Its activity is regulated as follows. Replication fork regression on Holliday junctions (HJ) is inhibited by DisA; DisA inhibits the ATPase activity of RecG. Functionally, critical role in recombination and DNA repair. Helps process Holliday junction intermediates to mature products by catalyzing branch migration. Has a DNA unwinding activity characteristic of a DNA helicase with 3'-5' polarity. Unwinds branched duplex DNA (Y-DNA), Holliday junction (HJ) DNA and partially replicated forks as well as catalyzing fork reversal/regression. Does not seem to unwind R-loops. Inhibits the diadenylate cyclase (DAC) activity of DisA in the presence but not absence of HJ DNA, possibly by relocating DisA from the junction. In Bacillus subtilis (strain 168), this protein is ATP-dependent DNA helicase RecG.